The chain runs to 183 residues: Glutathione-regulated potassium-efflux system ancillary protein KefG (183 aa).

It belongs to the NAD(P)H dehydrogenase (quinone) family. KefG subfamily. In terms of assembly, interacts with KefB.

The protein resides in the cell inner membrane. The catalysed reaction is a quinone + NADH + H(+) = a quinol + NAD(+). The enzyme catalyses a quinone + NADPH + H(+) = a quinol + NADP(+). In terms of biological role, regulatory subunit of a potassium efflux system that confers protection against electrophiles. Required for full activity of KefB. In Pectobacterium carotovorum subsp. carotovorum (strain PC1), this protein is Glutathione-regulated potassium-efflux system ancillary protein KefG.